The sequence spans 339 residues: Ketol-acid reductoisomerase (NADP(+)) (339 aa).

The KARI N-terminal Rossmann domain maps to 1 to 182 (MRVYYDRDAD…GGGRAGIIET (182 aa)). NADP(+) contacts are provided by residues 24–27 (YGSQ), Arg-48, Ser-51, Thr-53, and 83–86 (DELQ). His-108 is a catalytic residue. Gly-134 is a binding site for NADP(+). In terms of domain architecture, KARI C-terminal knotted spans 183-328 (TFKEECETDL…AKLRGMMPWI (146 aa)). Residues Asp-191, Glu-195, Glu-227, and Glu-231 each contribute to the Mg(2+) site. Position 252 (Ser-252) interacts with substrate.

Belongs to the ketol-acid reductoisomerase family. Requires Mg(2+) as cofactor.

The catalysed reaction is (2R)-2,3-dihydroxy-3-methylbutanoate + NADP(+) = (2S)-2-acetolactate + NADPH + H(+). It carries out the reaction (2R,3R)-2,3-dihydroxy-3-methylpentanoate + NADP(+) = (S)-2-ethyl-2-hydroxy-3-oxobutanoate + NADPH + H(+). The protein operates within amino-acid biosynthesis; L-isoleucine biosynthesis; L-isoleucine from 2-oxobutanoate: step 2/4. It participates in amino-acid biosynthesis; L-valine biosynthesis; L-valine from pyruvate: step 2/4. In terms of biological role, involved in the biosynthesis of branched-chain amino acids (BCAA). Catalyzes an alkyl-migration followed by a ketol-acid reduction of (S)-2-acetolactate (S2AL) to yield (R)-2,3-dihydroxy-isovalerate. In the isomerase reaction, S2AL is rearranged via a Mg-dependent methyl migration to produce 3-hydroxy-3-methyl-2-ketobutyrate (HMKB). In the reductase reaction, this 2-ketoacid undergoes a metal-dependent reduction by NADPH to yield (R)-2,3-dihydroxy-isovalerate. This chain is Ketol-acid reductoisomerase (NADP(+)), found in Methylorubrum extorquens (strain CM4 / NCIMB 13688) (Methylobacterium extorquens).